We begin with the raw amino-acid sequence, 263 residues long: Cytochrome c oxidase subunit 3 (263 aa).

Transmembrane regions (helical) follow at residues 9–29 (PFHM…AMIL), 40–60 (FNMN…IQWW), 84–104 (GMIL…WAFF), 129–149 (IQIP…ITWA), 161–181 (ALQG…LQMY), 198–218 (TFFV…TFLL), and 241–261 (AWYW…IYWW).

Belongs to the cytochrome c oxidase subunit 3 family. In terms of assembly, component of the cytochrome c oxidase (complex IV, CIV), a multisubunit enzyme composed of a catalytic core of 3 subunits and several supernumerary subunits. The complex exists as a monomer or a dimer and forms supercomplexes (SCs) in the inner mitochondrial membrane with ubiquinol-cytochrome c oxidoreductase (cytochrome b-c1 complex, complex III, CIII).

Its subcellular location is the mitochondrion inner membrane. The catalysed reaction is 4 Fe(II)-[cytochrome c] + O2 + 8 H(+)(in) = 4 Fe(III)-[cytochrome c] + 2 H2O + 4 H(+)(out). In terms of biological role, component of the cytochrome c oxidase, the last enzyme in the mitochondrial electron transport chain which drives oxidative phosphorylation. The respiratory chain contains 3 multisubunit complexes succinate dehydrogenase (complex II, CII), ubiquinol-cytochrome c oxidoreductase (cytochrome b-c1 complex, complex III, CIII) and cytochrome c oxidase (complex IV, CIV), that cooperate to transfer electrons derived from NADH and succinate to molecular oxygen, creating an electrochemical gradient over the inner membrane that drives transmembrane transport and the ATP synthase. Cytochrome c oxidase is the component of the respiratory chain that catalyzes the reduction of oxygen to water. Electrons originating from reduced cytochrome c in the intermembrane space (IMS) are transferred via the dinuclear copper A center (CU(A)) of subunit 2 and heme A of subunit 1 to the active site in subunit 1, a binuclear center (BNC) formed by heme A3 and copper B (CU(B)). The BNC reduces molecular oxygen to 2 water molecules using 4 electrons from cytochrome c in the IMS and 4 protons from the mitochondrial matrix. This chain is Cytochrome c oxidase subunit 3 (COIII), found in Locusta migratoria (Migratory locust).